Here is a 506-residue protein sequence, read N- to C-terminus: Squalene monooxygenase 1,1 (506 aa).

2 helical membrane-spanning segments follow: residues 3–23 (LAFP…WTVF) and 47–67 (DADV…YALA). Residues 57–58 (VG), 77–78 (ER), arginine 85, phenylalanine 90, arginine 157, valine 173, aspartate 336, and methionine 349 contribute to the FAD site. The helical transmembrane segment at 447–467 (LIFHLCGITLSSIGQLLSPFP) threads the bilayer.

It belongs to the squalene monooxygenase family. FAD serves as cofactor.

The protein localises to the membrane. It carries out the reaction squalene + reduced [NADPH--hemoprotein reductase] + O2 = (S)-2,3-epoxysqualene + oxidized [NADPH--hemoprotein reductase] + H2O + H(+). It functions in the pathway terpene metabolism; lanosterol biosynthesis; lanosterol from farnesyl diphosphate: step 2/3. Catalyzes the stereospecific oxidation of squalene to (S)-2,3-epoxysqualene, and is considered to be a rate-limiting enzyme in steroid biosynthesis. The protein is Squalene monooxygenase 1,1 (SQP1,1) of Brassica napus (Rape).